The following is a 153-amino-acid chain: Late embryogenesis abundant protein B19.4 (153 aa).

The disordered stretch occupies residues 1 to 153 (MASGQQERSE…IDESKFKTKS (153 aa)). 3 stretches are compositionally biased toward basic and acidic residues: residues 7 to 19 (ERSELDRMAREGE), 32 to 122 (EAQE…EMGR), and 133 to 153 (GGERAAREGIDIDESKFKTKS). 4 consecutive repeat copies span residues 43–62 (RGGQTRKEQLGEEGYREMGH), 63–82 (KGGETRKEQLGEEGYREMGH), 83–102 (KGGETRKEQLGEEGYREMGH), and 103–122 (KGGETRKEQMGEEGYREMGR). The tract at residues 43-122 (RGGQTRKEQL…GEEGYREMGR (80 aa)) is 4 X 20 AA tandem repeats.

Belongs to the small hydrophilic plant seed protein family.

Its function is as follows. Lea proteins are late embryonic proteins abundant in higher plant seed embryos. This Hordeum vulgare (Barley) protein is Late embryogenesis abundant protein B19.4 (B19.4).